Here is a 191-residue protein sequence, read N- to C-terminus: Adenylate kinase (191 aa).

Residue 9–17 (GVPGVGATT) participates in ATP binding.

The protein belongs to the archaeal adenylate kinase family.

It is found in the cytoplasm. It catalyses the reaction AMP + ATP = 2 ADP. The chain is Adenylate kinase from Methanopyrus kandleri (strain AV19 / DSM 6324 / JCM 9639 / NBRC 100938).